We begin with the raw amino-acid sequence, 465 residues long: UDP-N-acetylmuramoylalanine--D-glutamate ligase (465 aa).

Residue 127-133 coordinates ATP; that stretch reads GSNGKST.

Belongs to the MurCDEF family.

Its subcellular location is the cytoplasm. It catalyses the reaction UDP-N-acetyl-alpha-D-muramoyl-L-alanine + D-glutamate + ATP = UDP-N-acetyl-alpha-D-muramoyl-L-alanyl-D-glutamate + ADP + phosphate + H(+). It functions in the pathway cell wall biogenesis; peptidoglycan biosynthesis. Its function is as follows. Cell wall formation. Catalyzes the addition of glutamate to the nucleotide precursor UDP-N-acetylmuramoyl-L-alanine (UMA). In Cereibacter sphaeroides (strain KD131 / KCTC 12085) (Rhodobacter sphaeroides), this protein is UDP-N-acetylmuramoylalanine--D-glutamate ligase.